Consider the following 333-residue polypeptide: Acetyl-coenzyme A carboxylase carboxyl transferase subunit alpha (333 aa).

The CoA carboxyltransferase C-terminal domain maps to 48 to 308 (ALEVKVETLR…KEMLIEELRI (261 aa)).

It belongs to the AccA family. In terms of assembly, acetyl-CoA carboxylase is a heterohexamer composed of biotin carboxyl carrier protein (AccB), biotin carboxylase (AccC) and two subunits each of ACCase subunit alpha (AccA) and ACCase subunit beta (AccD).

The protein resides in the cytoplasm. The catalysed reaction is N(6)-carboxybiotinyl-L-lysyl-[protein] + acetyl-CoA = N(6)-biotinyl-L-lysyl-[protein] + malonyl-CoA. It participates in lipid metabolism; malonyl-CoA biosynthesis; malonyl-CoA from acetyl-CoA: step 1/1. Its function is as follows. Component of the acetyl coenzyme A carboxylase (ACC) complex. First, biotin carboxylase catalyzes the carboxylation of biotin on its carrier protein (BCCP) and then the CO(2) group is transferred by the carboxyltransferase to acetyl-CoA to form malonyl-CoA. The sequence is that of Acetyl-coenzyme A carboxylase carboxyl transferase subunit alpha from Chlorobium phaeobacteroides (strain DSM 266 / SMG 266 / 2430).